Here is a 72-residue protein sequence, read N- to C-terminus: DNA-directed RNA polymerase subunit omega (72 aa).

Belongs to the RNA polymerase subunit omega family. In terms of assembly, the RNAP catalytic core consists of 2 alpha, 1 beta, 1 beta' and 1 omega subunit. When a sigma factor is associated with the core the holoenzyme is formed, which can initiate transcription.

The enzyme catalyses RNA(n) + a ribonucleoside 5'-triphosphate = RNA(n+1) + diphosphate. Functionally, promotes RNA polymerase assembly. Latches the N- and C-terminal regions of the beta' subunit thereby facilitating its interaction with the beta and alpha subunits. In Clostridium botulinum (strain Langeland / NCTC 10281 / Type F), this protein is DNA-directed RNA polymerase subunit omega.